We begin with the raw amino-acid sequence, 448 residues long: Exodeoxyribonuclease 7 large subunit (448 aa).

Belongs to the XseA family. As to quaternary structure, heterooligomer composed of large and small subunits.

It localises to the cytoplasm. The enzyme catalyses Exonucleolytic cleavage in either 5'- to 3'- or 3'- to 5'-direction to yield nucleoside 5'-phosphates.. Functionally, bidirectionally degrades single-stranded DNA into large acid-insoluble oligonucleotides, which are then degraded further into small acid-soluble oligonucleotides. In Shewanella baltica (strain OS195), this protein is Exodeoxyribonuclease 7 large subunit.